Here is a 306-residue protein sequence, read N- to C-terminus: TnpB-like protein aq_aa05 (306 aa).

Positions 213, 216, 234, and 237 each coordinate Zn(2+).

Belongs to the transposase 35 family.

This Aquifex aeolicus (strain VF5) protein is TnpB-like protein aq_aa05.